A 74-amino-acid chain; its full sequence is Molt-inhibiting hormone (74 aa).

Glutamine 1 is subject to Pyrrolidone carboxylic acid. 3 disulfides stabilise this stretch: cysteine 7-cysteine 43, cysteine 23-cysteine 39, and cysteine 26-cysteine 52. Valine 72 carries the valine amide modification.

The protein localises to the secreted. Functionally, inhibits Y-organs where molting hormone (ecdysteroid) is secreted. A molting cycle is initiated when MIH secretion diminishes or stops. The chain is Molt-inhibiting hormone from Procambarus bouvieri (Mexican crayfish).